Here is an 874-residue protein sequence, read N- to C-terminus: Adhesion G-protein coupled receptor D1 (874 aa).

A signal peptide spans 1–25 (MEKLLRLCCWYSWLLLFYYNFQVRG). Residues 26–567 (VYSRSQDHPG…LARGHQVALS (542 aa)) lie on the Extracellular side of the membrane. One can recognise a Pentraxin (PTX) domain in the interval 79–276 (KGVTLLYYGR…ASPVMPTDAY (198 aa)). N90, N185, N282, N302, N319, N394, N476, N501, and N533 each carry an N-linked (GlcNAc...) asparagine glycan. Residues 371-557 (QVTVEGSSAM…AILMQVVPLE (187 aa)) form the GAIN-B domain. Disulfide bonds link C510–C539 and C527–C541. The interval 510–557 (CAFLDFSSGEGVWSNHGCALTRGNLTYSVCRCTHLTNFAILMQVVPLE) is GPS. A stachel region spans residues 546 to 554 (NFAILMQVV). A 17beta-hydroxy-5alpha-androstan-3-one-binding site is contributed by Q563. Residues 568 to 590 (SISYVGCSLSVLCLVATLVTFAV) traverse the membrane as a helical segment. Residues 591–601 (LSSVSTIRNQR) are Cytoplasmic-facing. A helical transmembrane segment spans residues 602-623 (YHIHANLSFAVLVAQVLLLISF). At 624–632 (RLEPGTTPC) the chain is on the extracellular side. A disulfide bridge links C632 with C704. The helical transmembrane segment at 633–655 (QVMAVLLHYFFLSAFAWMLVEGL) threads the bilayer. The Cytoplasmic portion of the chain corresponds to 656-673 (HLYSMVIKVFGSEDSKHR). A helical transmembrane segment spans residues 674 to 695 (YYYGMGWGFPLLICIISLSFAM). The Extracellular portion of the chain corresponds to 696–710 (DSYGTSNNCWLSLAS). Residues 711–732 (GAIWAFVAPALFVIVVNIGILI) traverse the membrane as a helical segment. The Cytoplasmic segment spans residues 733–757 (AVTRVISQISADNYKIHGDPSAFKL). Residues 758–780 (TAKAVAVLLPILGTSWVFGVLAV) traverse the membrane as a helical segment. Residues 781-783 (NGC) lie on the Extracellular side of the membrane. A helical membrane pass occupies residues 784–810 (AVVFQYMFATLNSLQGLFIFLFHCLLN). N795 provides a ligand contact to 17beta-hydroxy-5alpha-androstan-3-one. At 811 to 874 (SEVRAAFKHK…SAHRVDLSAV (64 aa)) the chain is on the cytoplasmic side. Residues 854 to 874 (TKLSPWDKSSHSAHRVDLSAV) are disordered. Over residues 861–874 (KSSHSAHRVDLSAV) the composition is skewed to basic and acidic residues.

This sequence belongs to the G-protein coupled receptor 2 family. Adhesion G-protein coupled receptor (ADGR) subfamily. As to quaternary structure, heterodimer of 2 chains generated by proteolytic processing; the large extracellular N-terminal fragment and the membrane-bound C-terminal fragment predominantly remain associated and non-covalently linked. Interacts with ESYT1; interaction takes place in absence of cytosolic calcium and inhibits the G protein-coupled receptor activity of ADGRD1. In terms of processing, autoproteolytically processed at the GPS region of the GAIN-B domain; this cleavage modulates receptor activity. Cleavage takes place early in the secretory pathway before N-glycosylation. In terms of tissue distribution, up-regulated in CD133(+) cell population of glioblastoma.

It localises to the cell membrane. Forms a heterodimer of 2 chains generated by proteolytic processing that remain associated through non-covalent interactions mediated by the GAIN-B domain. In the inactivated receptor, the Stachel sequence (also named stalk) is embedded in the GAIN-B domain, where it adopts a beta-strand conformation. On activation, the Stachel moves into the 7 transmembrane region and adopts a twisted hook-shaped configuration that forms contacts within the receptor, leading to coupling of a G-alpha protein, which activates signaling. The cleaved GAIN-B and N-terminal domains can then dissociate from the rest of the receptor. Interaction with ESYT1 in absence of cytosolic calcium inhibits the G protein-coupled receptor activity; interaction and inhibition is relieved when cytosolic calcium increases. Activated by AP503, a small molecule that activates ADGRD1 without activating androgen nuclear receptors: AP503 enhances muscle strength without eliciting androgenic adverse effects. Activated by the 8E3E8 antibody that targets the N-terminus. Its function is as follows. Adhesion G-protein coupled receptor (aGPCR) for androgen hormone 5alpha-dihydrotestosterone (5alpha-DHT), also named 17beta-hydroxy-5alpha-androstan-3-one, the most potent hormone among androgens. Also activated by methenolone drug. Ligand binding causes a conformation change that triggers signaling via guanine nucleotide-binding proteins (G proteins) and modulates the activity of downstream effectors, such as adenylate cyclase. ADGRD1 is coupled to G(s) G proteins and mediates activation of adenylate cyclase activity. Acts as a 5alpha-DHT receptor in muscle cells, thereby increasing intracellular cyclic AMP (cAMP) levels and enhancing muscle strength. The polypeptide is Adhesion G-protein coupled receptor D1 (Homo sapiens (Human)).